A 408-amino-acid polypeptide reads, in one-letter code: UPF0761 membrane protein azo3165 (408 aa).

The next 7 membrane-spanning stretches (helical) occupy residues 29 to 49 (LAFT…GVFG), 92 to 112 (LTLI…ATIE), 131 to 151 (ITVS…SVVA), 172 to 192 (IAAA…LYYA), 197 to 217 (PVRL…FLLM), 220 to 240 (GLGL…TFAA), and 241 to 261 (LPIF…GALI).

It belongs to the UPF0761 family.

It is found in the cell inner membrane. The polypeptide is UPF0761 membrane protein azo3165 (Azoarcus sp. (strain BH72)).